We begin with the raw amino-acid sequence, 308 residues long: Putative S-adenosyl-L-methionine-dependent methyltransferase MAB_4585c (308 aa).

S-adenosyl-L-methionine contacts are provided by residues aspartate 131 and 160-161 (DL).

It belongs to the UPF0677 family.

Exhibits S-adenosyl-L-methionine-dependent methyltransferase activity. The protein is Putative S-adenosyl-L-methionine-dependent methyltransferase MAB_4585c of Mycobacteroides abscessus (strain ATCC 19977 / DSM 44196 / CCUG 20993 / CIP 104536 / JCM 13569 / NCTC 13031 / TMC 1543 / L948) (Mycobacterium abscessus).